The primary structure comprises 295 residues: Protease HtpX (295 aa).

2 consecutive transmembrane segments (helical) span residues 4–24 (ILLFVATNLAVVLVASITLSL) and 41–61 (SSLLVFCAVFGFAGSLVSLFI). Histidine 147 provides a ligand contact to Zn(2+). Glutamate 148 is a catalytic residue. Histidine 151 contributes to the Zn(2+) binding site. A run of 2 helical transmembrane segments spans residues 158 to 178 (VTLALVQGVVNTFVMFFARII) and 199 to 219 (VATIVAELILGILASMIVMWF). Glutamate 224 is a Zn(2+) binding site.

The protein belongs to the peptidase M48B family. Zn(2+) is required as a cofactor.

The protein resides in the cell inner membrane. The polypeptide is Protease HtpX (Pseudomonas putida (strain ATCC 47054 / DSM 6125 / CFBP 8728 / NCIMB 11950 / KT2440)).